Here is a 244-residue protein sequence, read N- to C-terminus: Probable transcriptional regulatory protein TT_C0469 (244 aa).

Belongs to the TACO1 family.

It localises to the cytoplasm. The sequence is that of Probable transcriptional regulatory protein TT_C0469 from Thermus thermophilus (strain ATCC BAA-163 / DSM 7039 / HB27).